The primary structure comprises 203 residues: Potassium channel Cha6605_3372 (203 aa).

Residues 1 to 7 (MVEAPEQ) lie on the Cytoplasmic side of the membrane. The chain crosses the membrane as a helical span at residues 8 to 31 (SETGRIEAFSDGVFAIAITLLVLE). A RxxxFSD motif motif is present at residues 12–18 (RIEAFSD). Residues 32-52 (IKVPQHKIVETVGLVSSLLSL) are Extracellular-facing. The short helix H1 stretch occupies residues 37–42 (HKIVET). Positions 44–50 (GLVSSLL) are short helix H2. A helical transmembrane segment spans residues 53 to 78 (WPSYLAFLTSFASILVMWVNHHRIFS). Topologically, residues 79–84 (LVARTD) are cytoplasmic. Residues 85–110 (HAFFYWNGLLLMLVTFVPFPTALLAE) form a helical membrane-spanning segment. Over 111-117 (YLIHPQA) the chain is Extracellular. A helical transmembrane segment spans residues 118–142 (RVAASVYAGIFLAIAIVFNRLWKHA). The Cytoplasmic segment spans residues 143 to 154 (ATADRLLAQKAD). The helical transmembrane segment at 155–181 (RHEVDAITKQYRFGPGLYLVAFALSFI) threads the bilayer. Residues 182 to 183 (SV) are Extracellular-facing. The helical transmembrane segment at 184-199 (WLSVGVCFVLAIYFAL) threads the bilayer. At 200–203 (RSNA) the chain is on the cytoplasmic side.

The protein belongs to the TMEM175 family. Homotetramer.

The protein resides in the membrane. The catalysed reaction is K(+)(in) = K(+)(out). Potassium channel. The channel is permeable for K(+), Rb(+) and Cs(+), while it is unable to conduct Na(+). The sequence is that of Potassium channel Cha6605_3372 from Chamaesiphon minutus (strain ATCC 27169 / PCC 6605).